A 265-amino-acid polypeptide reads, in one-letter code: Type 1 encapsulin shell protein (265 aa).

The protein belongs to the encapsulin family. Family 1 subfamily. Multimeric. The encapsulin nanocompartment is formed by 60 subunits. Monomers form pentamers which assemble to form shells. There are 12 pores where the pentamers meet as well as 3-fold axis channels and dimer channels; none are larger than 3-4 Angstroms in diameter. The N-terminus of the protein is inside the shell, the C-terminus is outside. In terms of processing, the initiator methionine is partially removed. When isolated from culture filtrate isoelectric focusing gives 3 bands, none of which are glycosylated.

Its subcellular location is the encapsulin nanocompartment. The protein localises to the secreted. It is found in the cell membrane. In terms of biological role, shell component of a type 1 encapsulin nanocompartment in situ; its cargo protects against oxidative stress at low pH. In situ and in E.coli assembles into proteinaceous shells about 22 nm in diameter with 2.5 nm thick walls. Cargo proteins are targeted to the interior via their C-terminal extensions; empty intact shells can be isolated in E.coli in the absence of cargo protein. There are at least 4 possible cargo proteins, DyP (encoded in the same locus), FolB, BfrB and Rv1762c; DyP and Rv1762c have been identified in vivo. Probably involved in protection against oxidative damage from the host immune response. A T-cell antigen found in bacterial culture cell filtrates, stimulates mouse immune response. Does not have detectable bacteriocin activity. The polypeptide is Type 1 encapsulin shell protein (Mycobacterium tuberculosis (strain ATCC 25618 / H37Rv)).